A 385-amino-acid polypeptide reads, in one-letter code: Methylthioribose-1-phosphate isomerase (385 aa).

Residue Asp255 is the Proton donor of the active site.

It belongs to the eIF-2B alpha/beta/delta subunits family. MtnA subfamily.

Its subcellular location is the cytoplasm. It localises to the nucleus. The enzyme catalyses 5-(methylsulfanyl)-alpha-D-ribose 1-phosphate = 5-(methylsulfanyl)-D-ribulose 1-phosphate. The protein operates within amino-acid biosynthesis; L-methionine biosynthesis via salvage pathway; L-methionine from S-methyl-5-thio-alpha-D-ribose 1-phosphate: step 1/6. Functionally, catalyzes the interconversion of methylthioribose-1-phosphate (MTR-1-P) into methylthioribulose-1-phosphate (MTRu-1-P). The sequence is that of Methylthioribose-1-phosphate isomerase (mri1) from Aspergillus clavatus (strain ATCC 1007 / CBS 513.65 / DSM 816 / NCTC 3887 / NRRL 1 / QM 1276 / 107).